The sequence spans 191 residues: Programmed cell death protein 6 (191 aa).

An N-acetylalanine modification is found at Ala-2. 5 consecutive EF-hand domains span residues 23–58 (PDQSFLWNVFQRVDKDRSGVISDNELQQALSNGTWT), 59–89 (PFNPVTVRSIISMFDRENKAGVNFSEFTGVW), 90–125 (KYITDWQNVFRTYDRDNSGMIDKNELKQALSGFGYR), 126–161 (LSDQFHDILIRKFDRQGRGQIAFDDFIQGCIVLQRL), and 162–191 (TDIFRRYDTDQDGWIQVSYEQYLSMVFSIV). Residues Asp-36, Asp-38, Ser-40, Val-42, and Glu-47 each coordinate Ca(2+). Ca(2+) is bound by residues Asp-103, Asp-105, Ser-107, Met-109, and Glu-114. Mg(2+) contacts are provided by Asp-169, Asp-171, Asp-173, and Trp-175.

In terms of assembly, homodimer and heterodimer; heterodimerizes (via the EF-hand 5) with PEF1. Isoform 1 and isoform 2 self-associate; probably forming homodimers. Interacts with CPNE4 (via VWFA domain). Interacts with PDCD6IP; the interaction is calcium-dependent. Interacts with RBM22. Interacts with PLSCR4. Interacts with ANXA7 and TSG101. Interacts with DAPK1. Interacts with SEC31A; the interaction is calcium-dependent and promotes monoubiquitination of SEC31A. Interacts with ANXA11 (via N-terminus); the interaction is calcium-dependent. Interacts with PLSCR3 (via N-terminus); the interaction is calcium-dependent. Interacts with MCOLN1; the interaction is calcium-dependent. Interacts with KDR; the interaction is calcium-dependent. Interacts with HEBP2; the interaction is calcium-dependent. Interacts with TFG. Isoform 1: Interacts with SHISA5, leading to stabilize it. Isoform 2: Does not interact with SHISA5. Isoform 2: Does not interact with PDCD6IP, TSG101, ANXA7 and ANXA11.

The protein localises to the endoplasmic reticulum membrane. The protein resides in the cytoplasmic vesicle. It is found in the COPII-coated vesicle membrane. It localises to the cytoplasm. Its subcellular location is the nucleus. The protein localises to the endosome. Functionally, calcium sensor that plays a key role in processes such as endoplasmic reticulum (ER)-Golgi vesicular transport, endosomal biogenesis or membrane repair. Acts as an adapter that bridges unrelated proteins or stabilizes weak protein-protein complexes in response to calcium: calcium-binding triggers exposure of apolar surface, promoting interaction with different sets of proteins thanks to 3 different hydrophobic pockets, leading to translocation to membranes. Involved in ER-Golgi transport by promoting the association between PDCD6IP and TSG101, thereby bridging together the ESCRT-III and ESCRT-I complexes. Together with PEF1, acts as a calcium-dependent adapter for the BCR(KLHL12) complex, a complex involved in ER-Golgi transport by regulating the size of COPII coats. In response to cytosolic calcium increase, the heterodimer formed with PEF1 interacts with, and bridges together the BCR(KLHL12) complex and SEC31 (SEC31A or SEC31B), promoting monoubiquitination of SEC31 and subsequent collagen export, which is required for neural crest specification. Involved in the regulation of the distribution and function of MCOLN1 in the endosomal pathway. Promotes localization and polymerization of TFG at endoplasmic reticulum exit site. Required for T-cell receptor-, Fas-, and glucocorticoid-induced apoptosis. May mediate Ca(2+)-regulated signals along the death pathway: interaction with DAPK1 can accelerate apoptotic cell death by increasing caspase-3 activity. Its role in apoptosis may however be indirect, as suggested by knockout experiments. May inhibit KDR/VEGFR2-dependent angiogenesis; the function involves inhibition of VEGF-induced phosphorylation of the Akt signaling pathway. In terms of biological role, has a lower Ca(2+) affinity than isoform 1. The polypeptide is Programmed cell death protein 6 (Pdcd6) (Mus musculus (Mouse)).